A 569-amino-acid polypeptide reads, in one-letter code: uncharacterized protein (569 aa).

Positions 1–21 are cleaved as a signal peptide; sequence MLCVMMLLFSAIASFPVSAQA. Topologically, residues 22 to 530 are extracellular; the sequence is KDQDAGILII…DHHRQTPLEK (509 aa). A helical membrane pass occupies residues 531–551; that stretch reads ALWILSAVVLLFVIMFVSYTF. The Cytoplasmic portion of the chain corresponds to 552 to 569; the sequence is YLRATLKKRIFKERRSLG.

It localises to the cell membrane. This is an uncharacterized protein from Bacillus subtilis (strain 168).